The following is a 65-amino-acid chain: Ubiquinol-cytochrome-c reductase complex assembly factor 6 (65 aa).

Over 1-9 (MPAGVSWPR) the chain is Mitochondrial matrix. A helical; Signal-anchor for type II membrane protein transmembrane segment spans residues 10–32 (YLRMFAASVLSMFAGAQVVHHYY). Residues 33 to 65 (RPDLSIPEIPPKPGELRTELLGLKERQMDSQKQ) lie on the Mitochondrial intermembrane side of the membrane.

This sequence belongs to the UQCC6 family. As to expression, highly expressed in skeletal and cardiac muscle (at protein level).

Its subcellular location is the mitochondrion inner membrane. Functionally, required for the assembly and stability of the mitochondrial ubiquinol-cytochrome c reductase complex (complex III (CIII) or cytochrome b-c1 complex), a multisubunit transmembrane complex that is part of the mitochondrial electron transport chain (ETC) which drives oxidative phosphorylation. Mediates early complex III biogenesis. Participates in regulating the levels of electron transport chain proteins, and therefore energy supply, in response to changes in energy demand. Also required for cytochrome c oxidase complex (complex IV) assembly. This Danio rerio (Zebrafish) protein is Ubiquinol-cytochrome-c reductase complex assembly factor 6 (uqcc6).